The chain runs to 205 residues: Probable molybdenum cofactor guanylyltransferase (205 aa).

GTP is bound by residues 10-12 (LAG), Lys22, Asp69, and Asp100. Position 100 (Asp100) interacts with Mg(2+).

This sequence belongs to the MobA family. Mg(2+) serves as cofactor.

It is found in the cytoplasm. It catalyses the reaction Mo-molybdopterin + GTP + H(+) = Mo-molybdopterin guanine dinucleotide + diphosphate. Transfers a GMP moiety from GTP to Mo-molybdopterin (Mo-MPT) cofactor (Moco or molybdenum cofactor) to form Mo-molybdopterin guanine dinucleotide (Mo-MGD) cofactor. The polypeptide is Probable molybdenum cofactor guanylyltransferase (Natranaerobius thermophilus (strain ATCC BAA-1301 / DSM 18059 / JW/NM-WN-LF)).